Consider the following 292-residue polypeptide: Small ribosomal subunit protein uS9m (292 aa).

A disordered region spans residues 273–292; that stretch reads VERKKPGKRKARKMPTWVKR.

This sequence belongs to the universal ribosomal protein uS9 family.

It is found in the mitochondrion. In Kluyveromyces marxianus (Yeast), this protein is Small ribosomal subunit protein uS9m (MRPS9).